Here is a 22-residue protein sequence, read N- to C-terminus: 2.4 kDa venom peptide (22 aa).

In terms of processing, contains 2 disulfide bonds. Expressed by the venom gland.

It localises to the secreted. Its function is as follows. Not lethal to mice by intraperitoneal or intracerebroventricular injections in doses up to 150 micrograms. This is 2.4 kDa venom peptide from Heterometrus spinifer (Asia giant forest scorpion).